The sequence spans 206 residues: Putative precorrin-2 dehydrogenase (206 aa).

NAD(+)-binding positions include 20 to 21 (SV) and 41 to 46 (KEFDEE).

It belongs to the precorrin-2 dehydrogenase / sirohydrochlorin ferrochelatase family. Homodimer.

It catalyses the reaction precorrin-2 + NAD(+) = sirohydrochlorin + NADH + 2 H(+). Its pathway is porphyrin-containing compound metabolism; siroheme biosynthesis; sirohydrochlorin from precorrin-2: step 1/1. Involved in the archaeal biosynthesis of heme. Catalyzes the oxiation of precorrin-2 into sirohydroclorin. The protein is Putative precorrin-2 dehydrogenase of Methanocaldococcus jannaschii (strain ATCC 43067 / DSM 2661 / JAL-1 / JCM 10045 / NBRC 100440) (Methanococcus jannaschii).